Reading from the N-terminus, the 549-residue chain is Zinc finger protein 18 (549 aa).

The 83-residue stretch at Arg41–Pro123 folds into the SCAN box domain. Residues Asp211–Arg283 form the KRAB domain. 5 consecutive C2H2-type zinc fingers follow at residues Pro408–His430, Phe436–His458, Cys464–His486, Tyr492–His514, and Tyr520–His542.

Belongs to the krueppel C2H2-type zinc-finger protein family.

The protein localises to the nucleus. May be involved in transcriptional regulation. This Homo sapiens (Human) protein is Zinc finger protein 18 (ZNF18).